The chain runs to 113 residues: MRHYEITLIVHPDQSAQVGTMMEKYKEIITTGGGKIHRKEDWGRKHLAYPIKKIYKAHYLMMNIECDQEVLDKLNYNFRFNDAILRNLIISEDGVITTPSIMMANKDKEKGRS.

This sequence belongs to the bacterial ribosomal protein bS6 family.

In terms of biological role, binds together with bS18 to 16S ribosomal RNA. In Ruthia magnifica subsp. Calyptogena magnifica, this protein is Small ribosomal subunit protein bS6.